Consider the following 154-residue polypeptide: Ribosomal RNA large subunit methyltransferase H (154 aa).

Gly-102 is an S-adenosyl-L-methionine binding site.

The protein belongs to the RNA methyltransferase RlmH family. Homodimer.

The protein resides in the cytoplasm. The catalysed reaction is pseudouridine(1915) in 23S rRNA + S-adenosyl-L-methionine = N(3)-methylpseudouridine(1915) in 23S rRNA + S-adenosyl-L-homocysteine + H(+). Specifically methylates the pseudouridine at position 1915 (m3Psi1915) in 23S rRNA. The chain is Ribosomal RNA large subunit methyltransferase H from Caulobacter sp. (strain K31).